We begin with the raw amino-acid sequence, 421 residues long: Ig-like V-type domain-containing protein FAM187A (421 aa).

The N-terminal stretch at 1 to 18 (MNLAHTTVLLWAWGSLQA) is a signal peptide. At 19–377 (FEIVEKENIF…VSFSDPETRA (359 aa)) the chain is on the extracellular side. The 95-residue stretch at 268–362 (PWLPQVPIQF…IAGFRLGVTS (95 aa)) folds into the Ig-like V-type domain. Cysteines 290 and 346 form a disulfide. An N-linked (GlcNAc...) asparagine glycan is attached at N318. A helical transmembrane segment spans residues 378 to 398 (ALGLILIGYMLITVIFISIHL). Over 399–421 (CRCCCYLFRFCPNFSPRLSRPQL) the chain is Cytoplasmic.

Belongs to the FAM187 family.

It is found in the membrane. The polypeptide is Ig-like V-type domain-containing protein FAM187A (FAM187A) (Bos taurus (Bovine)).